Here is a 662-residue protein sequence, read N- to C-terminus: A-kinase anchor protein 10, mitochondrial (662 aa).

Residues 1-28 constitute a mitochondrion transit peptide; sequence MRGAGPSPRHSPRALRPDPGPAMSFFRR. Disordered regions lie at residues 1–55, 178–205, and 242–280; these read MRGA…SPQK, KQSSLAEPVSPSKRHETPASSVTEALDR, and GHSARSLHREVARTGSHQIPTDSQDSSSRLAVGSRNSCS. A compositionally biased stretch (basic and acidic residues) spans 32-43; it reads GKEQEKTLDVKS. A phosphoserine mark is found at S52 and S189. 2 RGS domains span residues 125 to 369 and 379 to 505; these read TLEQ…CKYQ and YLAD…YKYL. Residues 256–280 show a composition bias toward polar residues; sequence GSHQIPTDSQDSSSRLAVGSRNSCS. S281 is modified (phosphoserine). The segment at 634 to 647 is PKA-RII subunit binding; that stretch reads LAWKIAKMIVSDVM.

Highly expressed in testis, kidney and lung, followed by brain, skeletal muscle, liver, spleen and heart. Also expressed in brown adipose tissue and pancreas.

The protein localises to the mitochondrion. It localises to the membrane. The protein resides in the cytoplasm. Its function is as follows. Differentially targeted protein that binds to type I and II regulatory subunits of protein kinase A and anchors them to the mitochondria or the plasma membrane. Although the physiological relevance between PKA and AKAPS with mitochondria is not fully understood, one idea is that BAD, a proapoptotic member, is phosphorylated and inactivated by mitochondria-anchored PKA. It cannot be excluded too that it may facilitate PKA as well as G protein signal transduction, by acting as an adapter for assembling multiprotein complexes. With its RGS domain, it could lead to the interaction to G-alpha proteins, providing a link between the signaling machinery and the downstream kinase. This chain is A-kinase anchor protein 10, mitochondrial (Akap10), found in Mus musculus (Mouse).